The following is a 205-amino-acid chain: Small ribosomal subunit protein uS4B (205 aa).

In terms of domain architecture, S4 RNA-binding spans Arg94 to Leu157.

This sequence belongs to the universal ribosomal protein uS4 family. As to quaternary structure, part of the 30S ribosomal subunit. Contacts protein S5. The interaction surface between S4 and S5 is involved in control of translational fidelity.

Its function is as follows. One of the primary rRNA binding proteins, it binds directly to 16S rRNA where it nucleates assembly of the body of the 30S subunit. In terms of biological role, with S5 and S12 plays an important role in translational accuracy. The chain is Small ribosomal subunit protein uS4B from Nitrosomonas europaea (strain ATCC 19718 / CIP 103999 / KCTC 2705 / NBRC 14298).